A 124-amino-acid chain; its full sequence is Small ribosomal subunit protein uS12 (124 aa).

A disordered region spans residues 1-25; sequence MATINQLVRKPRQATTYKSASPALD. D89 carries the 3-methylthioaspartic acid modification.

It belongs to the universal ribosomal protein uS12 family. Part of the 30S ribosomal subunit. Contacts proteins S8 and S17. May interact with IF1 in the 30S initiation complex.

With S4 and S5 plays an important role in translational accuracy. In terms of biological role, interacts with and stabilizes bases of the 16S rRNA that are involved in tRNA selection in the A site and with the mRNA backbone. Located at the interface of the 30S and 50S subunits, it traverses the body of the 30S subunit contacting proteins on the other side and probably holding the rRNA structure together. The combined cluster of proteins S8, S12 and S17 appears to hold together the shoulder and platform of the 30S subunit. This Xanthomonas campestris pv. campestris (strain 8004) protein is Small ribosomal subunit protein uS12.